A 149-amino-acid chain; its full sequence is Urease accessory protein UreE (149 aa).

Belongs to the UreE family.

Its subcellular location is the cytoplasm. Its function is as follows. Involved in urease metallocenter assembly. Binds nickel. Probably functions as a nickel donor during metallocenter assembly. The sequence is that of Urease accessory protein UreE from Prochlorococcus marinus (strain MIT 9312).